A 34-amino-acid chain; its full sequence is Peptide 9797 (34 aa).

As to expression, expressed by the venom gland.

The protein localises to the secreted. The polypeptide is Peptide 9797 (Tityus stigmurus (Brazilian scorpion)).